A 460-amino-acid polypeptide reads, in one-letter code: GTPase Der (460 aa).

EngA-type G domains follow at residues glutamine 2–phenylalanine 164 and isoleucine 196–threonine 368. GTP-binding positions include glycine 8–serine 15, aspartate 55–leucine 59, asparagine 116–aspartate 119, glycine 202–serine 209, aspartate 249–isoleucine 253, and asparagine 313–aspartate 316. In terms of domain architecture, KH-like spans glutamine 369–glycine 453.

The protein belongs to the TRAFAC class TrmE-Era-EngA-EngB-Septin-like GTPase superfamily. EngA (Der) GTPase family. In terms of assembly, associates with the 50S ribosomal subunit.

Functionally, GTPase that plays an essential role in the late steps of ribosome biogenesis. This Campylobacter jejuni subsp. jejuni serotype O:6 (strain 81116 / NCTC 11828) protein is GTPase Der.